Here is a 359-residue protein sequence, read N- to C-terminus: Cell division protein ZipA (359 aa).

The Periplasmic portion of the chain corresponds to methionine 1–asparagine 4. Residues threonine 5–serine 25 traverse the membrane as a helical segment. Topologically, residues asparagine 26–lysine 359 are cytoplasmic. Positions proline 78 to proline 101 are disordered.

Belongs to the ZipA family. As to quaternary structure, interacts with FtsZ via their C-terminal domains.

It is found in the cell inner membrane. Essential cell division protein that stabilizes the FtsZ protofilaments by cross-linking them and that serves as a cytoplasmic membrane anchor for the Z ring. Also required for the recruitment to the septal ring of downstream cell division proteins. The polypeptide is Cell division protein ZipA (Mannheimia succiniciproducens (strain KCTC 0769BP / MBEL55E)).